The following is a 394-amino-acid chain: Chorismate synthase (394 aa).

R62 lines the NADP(+) pocket. Residues 144 to 146 (RAS), G307, 322 to 326 (KPTPT), and R349 each bind FMN.

Belongs to the chorismate synthase family. In terms of assembly, homotetramer. FMNH2 serves as cofactor.

It carries out the reaction 5-O-(1-carboxyvinyl)-3-phosphoshikimate = chorismate + phosphate. It participates in metabolic intermediate biosynthesis; chorismate biosynthesis; chorismate from D-erythrose 4-phosphate and phosphoenolpyruvate: step 7/7. In terms of biological role, catalyzes the anti-1,4-elimination of the C-3 phosphate and the C-6 proR hydrogen from 5-enolpyruvylshikimate-3-phosphate (EPSP) to yield chorismate, which is the branch point compound that serves as the starting substrate for the three terminal pathways of aromatic amino acid biosynthesis. This reaction introduces a second double bond into the aromatic ring system. The polypeptide is Chorismate synthase (Acetivibrio thermocellus (strain ATCC 27405 / DSM 1237 / JCM 9322 / NBRC 103400 / NCIMB 10682 / NRRL B-4536 / VPI 7372) (Clostridium thermocellum)).